Consider the following 498-residue polypeptide: Galactose-1-phosphate uridylyltransferase (498 aa).

The protein belongs to the galactose-1-phosphate uridylyltransferase type 2 family.

The protein resides in the cytoplasm. It catalyses the reaction alpha-D-galactose 1-phosphate + UDP-alpha-D-glucose = alpha-D-glucose 1-phosphate + UDP-alpha-D-galactose. The protein operates within carbohydrate metabolism; galactose metabolism. In Latilactobacillus sakei subsp. sakei (strain 23K) (Lactobacillus sakei subsp. sakei), this protein is Galactose-1-phosphate uridylyltransferase.